Consider the following 312-residue polypeptide: Malate dehydrogenase (312 aa).

NAD(+)-binding positions include 7-13 (GAAGGIG) and Asp-34. Arg-81 and Arg-87 together coordinate substrate. NAD(+)-binding positions include Asn-94 and 117 to 119 (ITN). Positions 119 and 153 each coordinate substrate. His-177 (proton acceptor) is an active-site residue. Met-227 is an NAD(+) binding site.

The protein belongs to the LDH/MDH superfamily. MDH type 1 family. In terms of assembly, homodimer.

It catalyses the reaction (S)-malate + NAD(+) = oxaloacetate + NADH + H(+). Its function is as follows. Catalyzes the reversible oxidation of malate to oxaloacetate. This Escherichia coli (strain ATCC 8739 / DSM 1576 / NBRC 3972 / NCIMB 8545 / WDCM 00012 / Crooks) protein is Malate dehydrogenase.